The following is a 700-amino-acid chain: Elongation factor G (700 aa).

The tr-type G domain occupies D8–L290. GTP is bound by residues A17–T24, D88–H92, and N142–D145.

The protein belongs to the TRAFAC class translation factor GTPase superfamily. Classic translation factor GTPase family. EF-G/EF-2 subfamily.

The protein localises to the cytoplasm. Catalyzes the GTP-dependent ribosomal translocation step during translation elongation. During this step, the ribosome changes from the pre-translocational (PRE) to the post-translocational (POST) state as the newly formed A-site-bound peptidyl-tRNA and P-site-bound deacylated tRNA move to the P and E sites, respectively. Catalyzes the coordinated movement of the two tRNA molecules, the mRNA and conformational changes in the ribosome. This is Elongation factor G from Vesicomyosocius okutanii subsp. Calyptogena okutanii (strain HA).